Reading from the N-terminus, the 573-residue chain is Glutathione hydrolase 5 proenzyme (573 aa).

Topologically, residues 1-8 are cytoplasmic; that stretch reads MAWGHRAT. A helical; Signal-anchor for type II membrane protein transmembrane segment spans residues 9 to 29; sequence VCLVLLGVGLGLVIVVLAAVL. Residues 30–573 are Extracellular-facing; that stretch reads SPRQASCGPG…LRKAGKASGY (544 aa). An N-linked (GlcNAc...) asparagine glycan is attached at Asn-98. Position 110 (Arg-110) interacts with L-glutamate. Asn-185, Asn-204, Asn-277, Asn-303, Asn-347, and Asn-378 each carry an N-linked (GlcNAc...) asparagine glycan. Residue Thr-389 is the Nucleophile of the active site. Residues Thr-407, Glu-428, and 454 to 455 contribute to the L-glutamate site; that span reads SS.

Belongs to the gamma-glutamyltransferase family. As to quaternary structure, heterodimer composed of the light and heavy chains. The active site is located in the light chain. Post-translationally, cleaved by autocatalysis into a large and a small subunit. Glycosylated. Very low level of expression. Detected in spleen lymphocytes, medullary and paracortical thymic lymphocytes, lung interstitial cells, bronchial epithelium, proximal tubules in kidney, crypt cells in small intestine, neurons in brain stem and cerebral cortex and in Purkinje cells. As to expression, very low expression.

Its subcellular location is the membrane. The catalysed reaction is glutathione + H2O = L-cysteinylglycine + L-glutamate. It carries out the reaction an S-substituted glutathione + H2O = an S-substituted L-cysteinylglycine + L-glutamate. It catalyses the reaction leukotriene C4 + H2O = leukotriene D4 + L-glutamate. The enzyme catalyses S-[(2E,6E,10E)-geranylgeranyl]-L-glutathione + H2O = S-[(2E,6E,10E)-geranylgeranyl]-L-cysteinylglycine + L-glutamate. The catalysed reaction is an N-terminal (5-L-glutamyl)-[peptide] + an alpha-amino acid = 5-L-glutamyl amino acid + an N-terminal L-alpha-aminoacyl-[peptide]. It functions in the pathway lipid metabolism; leukotriene D4 biosynthesis. The protein operates within sulfur metabolism; glutathione metabolism. With respect to regulation, inhibited by serine-borate. In terms of biological role, cleaves the gamma-glutamyl bond of extracellular glutathione tripeptide (gamma-Glu-Cys-Gly) and certain glutathione conjugates. Hydrolyzes glutathione releasing L-Glu and Cys-Gly dipeptide which is further metabolized to maintain extracellular cysteine levels but also to provide cysteine necessary for intracellular glutathione synthesis. Among glutathione-S-conjugates metabolizes leukotriene C4 (LTC4) and S-geranylgeranyl-glutathione (GGG), but is inactive toward gamma-glutamyl leucine. Converts extracellular LTC4 to LTD4 during acute inflammatory response. Acts as a negative regulator of GGG bioactivity. GGT5 (via GGG catabolism) and ABCC1 (via extracellular transport) establish GGG gradients within lymphoid tissues to position P2RY8-positive lymphocytes at germinal centers in lymphoid follicles and restrict their chemotactic transmigration from blood vessels to bone marrow parenchyma. The transpeptidation reaction, i.e. the transfer of gamma-glutamyl moiety to an acceptor molecule to yield a new gamma-glutamyl compound requires high concentration of dipeptide acceptor and is considered nonphysiological. This Mus musculus (Mouse) protein is Glutathione hydrolase 5 proenzyme (Ggt5).